The chain runs to 812 residues: Probable phosphoketolase (812 aa).

It belongs to the XFP family. The cofactor is thiamine diphosphate.

The sequence is that of Probable phosphoketolase from Thermosynechococcus vestitus (strain NIES-2133 / IAM M-273 / BP-1).